Reading from the N-terminus, the 238-residue chain is Arginine ABC transporter permease protein ArtQ (238 aa).

The Periplasmic segment spans residues 1 to 14; it reads MNEFFPLASAAGMT. Residues 11–223 enclose the ABC transmembrane type-1 domain; sequence AGMTVGLAVC…VITLLSQYIL (213 aa). A helical membrane pass occupies residues 15 to 35; that stretch reads VGLAVCALIVGLALAMFFAVW. Over 36 to 48 the chain is Cytoplasmic; it reads ESAKWRPVAWAGS. Residues 49-69 traverse the membrane as a helical segment; it reads ALVTILRGLPEILVVLFIYFG. The Periplasmic segment spans residues 70-98; sequence SSQLLLTLSDGFTINLGFVQIPVQMDIEN. A helical transmembrane segment spans residues 99–119; the sequence is FDVSPFLCGVIALSLLYAAYA. The Cytoplasmic segment spans residues 120 to 168; sequence SQTLRGALKAVPVGQWESGQALGLSKSAIFFRLVMPQMWRHALPGLGNQ. Residues 169–189 form a helical membrane-spanning segment; the sequence is WLVLLKDTALVSLISVNDLML. Over 190-201 the chain is Periplasmic; it reads QTKSIATRTQEP. A helical membrane pass occupies residues 202-222; that stretch reads FTWYIVAAAIYLVITLLSQYI. Over 223 to 238 the chain is Cytoplasmic; it reads LKRIDLRATRFERRPS.

The protein belongs to the binding-protein-dependent transport system permease family. HisMQ subfamily. In terms of assembly, the complex is composed of two ATP-binding proteins (ArtP), two transmembrane proteins (ArtM and ArtQ) and two solute-binding proteins (ArtJ and ArtI).

The protein localises to the cell inner membrane. Its function is as follows. Part of the ABC transporter complex ArtPIQMJ involved in arginine transport. Probably responsible for the translocation of the substrate across the membrane. The protein is Arginine ABC transporter permease protein ArtQ (artQ) of Escherichia coli O6:H1 (strain CFT073 / ATCC 700928 / UPEC).